The chain runs to 427 residues: Trigger factor (427 aa).

Positions 163-248 (GDTVVIDFVG…VHEVKSKEVP (86 aa)) constitute a PPIase FKBP-type domain.

Belongs to the FKBP-type PPIase family. Tig subfamily.

The protein resides in the cytoplasm. The enzyme catalyses [protein]-peptidylproline (omega=180) = [protein]-peptidylproline (omega=0). In terms of biological role, involved in protein export. Acts as a chaperone by maintaining the newly synthesized protein in an open conformation. Functions as a peptidyl-prolyl cis-trans isomerase. This Streptococcus uberis (strain ATCC BAA-854 / 0140J) protein is Trigger factor.